Here is a 285-residue protein sequence, read N- to C-terminus: Probable endonuclease 4 (285 aa).

Residues His-69, His-109, Glu-145, Asp-179, His-182, His-216, Asp-229, His-231, and Glu-261 each coordinate Zn(2+).

This sequence belongs to the AP endonuclease 2 family. The cofactor is Zn(2+).

The enzyme catalyses Endonucleolytic cleavage to 5'-phosphooligonucleotide end-products.. In terms of biological role, endonuclease IV plays a role in DNA repair. It cleaves phosphodiester bonds at apurinic or apyrimidinic (AP) sites, generating a 3'-hydroxyl group and a 5'-terminal sugar phosphate. The polypeptide is Probable endonuclease 4 (Salmonella schwarzengrund (strain CVM19633)).